The chain runs to 125 residues: Small ribosomal subunit protein uS12m (125 aa).

Disordered stretches follow at residues 1 to 29 (MPTKNQLIRHGREEKQRTDRTRASDQCPQ) and 105 to 125 (LGIPDRRKGRSKYGAERPKSK). The span at 10 to 23 (HGREEKQRTDRTRA) shows a compositional bias: basic and acidic residues.

Belongs to the universal ribosomal protein uS12 family.

The protein resides in the mitochondrion. Its function is as follows. Protein S12 is involved in the translation initiation step. The chain is Small ribosomal subunit protein uS12m (RPS12) from Oryza sativa subsp. japonica (Rice).